We begin with the raw amino-acid sequence, 204 residues long: Small ribosomal subunit protein uS4 (204 aa).

The 66-residue stretch at 92–157 (RRLDALVLRS…KPLFEVAREG (66 aa)) folds into the S4 RNA-binding domain.

This sequence belongs to the universal ribosomal protein uS4 family. Part of the 30S ribosomal subunit. Contacts protein S5. The interaction surface between S4 and S5 is involved in control of translational fidelity.

Functionally, one of the primary rRNA binding proteins, it binds directly to 16S rRNA where it nucleates assembly of the body of the 30S subunit. Its function is as follows. With S5 and S12 plays an important role in translational accuracy. The protein is Small ribosomal subunit protein uS4 of Streptomyces avermitilis (strain ATCC 31267 / DSM 46492 / JCM 5070 / NBRC 14893 / NCIMB 12804 / NRRL 8165 / MA-4680).